A 268-amino-acid polypeptide reads, in one-letter code: Nickel import ATP-binding protein NikE (268 aa).

One can recognise an ABC transporter domain in the interval 4–252 (LNVCGLSHHY…SSDAGRVLQN (249 aa)). Residue 45 to 52 (GRSGCGKS) participates in ATP binding.

The protein belongs to the ABC transporter superfamily. Nickel importer (TC 3.A.1.5.3) family. In terms of assembly, the complex is composed of two ATP-binding proteins (NikD and NikE), two transmembrane proteins (NikB and NikC) and a solute-binding protein (NikA).

It is found in the cell inner membrane. It carries out the reaction Ni(2+)(out) + ATP + H2O = Ni(2+)(in) + ADP + phosphate + H(+). Functionally, part of the ABC transporter complex NikABCDE involved in nickel import. Responsible for energy coupling to the transport system. The polypeptide is Nickel import ATP-binding protein NikE (Shigella flexneri).